The primary structure comprises 410 residues: Lipid droplet-regulating VLDL assembly factor AUP1 (410 aa).

Position 1 is an N-acetylmethionine (methionine 1). The Cytoplasmic portion of the chain corresponds to 1 to 20 (MELPSGPGPERLFDSHRLPG). Serine 5 carries the post-translational modification Phosphoserine. The stretch at 21–41 (DCFLLLVLLLYAPVGFCLLVL) is an intramembrane region. Over 42-410 (RLFLGIHVFL…FTERRAQEAD (369 aa)) the chain is Cytoplasmic. Positions 255-295 (TGTRLTPADKAEHMKRQRHPRLRPQSAQSSFPPSPGPSPDV) are disordered. A phosphoserine mark is found at serine 288 and serine 292. The CUE domain maps to 296–338 (QLATLAQRVKEVLPHVPLGVIQRDLAKTGCVDLTITNLLEGAV). Positions 350-369 (QSLPTASASKFPSSGPVTPQ) are disordered. Serine 363 bears the Phosphoserine mark. Threonine 367 is subject to Phosphothreonine.

This sequence belongs to the AUP1 family. As to quaternary structure, identified in a complex that contains SEL1L, OS9, FAF2/UBXD8, UBE2J1/UBC6E and AUP1. Interacts with the cytoplasmic tail of ITGA2B, ITGA1, ITGA2, ITGA5, ITGAV and ITGAM. Interacts (via C-terminus) with ubiquitin-conjugating enzyme UBE2G2; the interaction recruits UBE2G2 to lipid droplets. Interacts with ubiquitin ligases AMFR/gp78 and RNF139/TRC8; this promotes interaction of UBE2G2 with AMFR and RNF139. Interacts with apolipoprotein APOB. (Microbial infection) Interacts with Dengue virus NS4A; the interaction occurs in the presence of Dengue virus NS4B and induces lipophagy which facilitates production of virus progeny. In terms of processing, monoubiquitinated and diubiquitinated. (Microbial infection) Not ubiquitinated following Dengue virus infection. Detected in blood platelets and leukocytes (at protein level). Ubiquitous. Highly expressed in placenta, liver, kidney, skeletal muscle, heart and brain.

It is found in the endoplasmic reticulum membrane. Its subcellular location is the lipid droplet. The protein localises to the cytoplasmic vesicle. It localises to the autophagosome. Functionally, plays a role in the translocation of terminally misfolded proteins from the endoplasmic reticulum lumen to the cytoplasm and their degradation by the proteasome. Plays a role in lipid droplet formation. Induces lipid droplet clustering. Recruits ubiquitin-conjugating enzyme UBE2G2 to lipid droplets which facilitates its interaction with ubiquitin ligases AMFR/gp78 and RNF139/TRC8, leading to sterol-induced ubiquitination of HMGCR and its subsequent proteasomal degradation. Also required for the degradation of INSIG1, SREBF1 and SREBF2. Plays a role in regulating assembly and secretion of very low density lipoprotein particles and stability of apolipoprotein APOB. Its function is as follows. (Microbial infection) Following Dengue virus infection, required for induction of lipophagy which facilitates production of virus progeny particles. The chain is Lipid droplet-regulating VLDL assembly factor AUP1 from Homo sapiens (Human).